A 701-amino-acid polypeptide reads, in one-letter code: ABC transporter G family member 23 (701 aa).

Residues I7–Y237 form the ABC transporter domain. Residue G39 to T46 participates in ATP binding. 6 helical membrane-spanning segments follow: residues F335–I355, F493–I513, H541–V561, L574–I596, L608–I628, and L665–I685. An ABC transmembrane type-2 domain is found at F459–G686.

The protein belongs to the ABC transporter superfamily. ABCG family.

The protein resides in the membrane. In Dictyostelium discoideum (Social amoeba), this protein is ABC transporter G family member 23 (abcG23).